Consider the following 226-residue polypeptide: PKHD-type hydroxylase Sde_2812 (226 aa).

The 101-residue stretch at 78 to 178 folds into the Fe2OG dioxygenase domain; that stretch reads KIFPPLFNCY…RLASFFWLQS (101 aa). Residues H96, D98, and H159 each contribute to the Fe cation site. R169 provides a ligand contact to 2-oxoglutarate.

Requires Fe(2+) as cofactor. The cofactor is L-ascorbate.

This Saccharophagus degradans (strain 2-40 / ATCC 43961 / DSM 17024) protein is PKHD-type hydroxylase Sde_2812.